Consider the following 448-residue polypeptide: Chromosomal replication initiator protein DnaA (448 aa).

The segment at 1-73 is domain I, interacts with DnaA modulators; sequence MSTHLTETWE…VNALKLLTSK (73 aa). The interval 73–109 is domain II; sequence KKYNIDFIVTTEEKIEENEKNHNNEKSNIVVNDEMST. Positions 110–326 are domain III, AAA+ region; that stretch reads MLNPKYTFDS…GALIRIVAFS (217 aa). ATP-binding residues include glycine 154, glycine 156, lysine 157, and threonine 158. Residues 327 to 448 form a domain IV, binds dsDNA region; that stretch reads SLTNKEISVD…NELNKRINQK (122 aa).

This sequence belongs to the DnaA family. As to quaternary structure, oligomerizes as a right-handed, spiral filament on DNA at oriC.

The protein localises to the cytoplasm. Functionally, plays an essential role in the initiation and regulation of chromosomal replication. ATP-DnaA binds to the origin of replication (oriC) to initiate formation of the DNA replication initiation complex once per cell cycle. Binds the DnaA box (a 9 base pair repeat at the origin) and separates the double-stranded (ds)DNA. Forms a right-handed helical filament on oriC DNA; dsDNA binds to the exterior of the filament while single-stranded (ss)DNA is stabiized in the filament's interior. The ATP-DnaA-oriC complex binds and stabilizes one strand of the AT-rich DNA unwinding element (DUE), permitting loading of DNA polymerase. After initiation quickly degrades to an ADP-DnaA complex that is not apt for DNA replication. Binds acidic phospholipids. The chain is Chromosomal replication initiator protein DnaA from Clostridium botulinum (strain 657 / Type Ba4).